The sequence spans 747 residues: Sushi domain-containing protein 1 (747 aa).

The first 29 residues, 1-29 (MGRGPWDAGPSRRLLPLLLLLGLARGAAG), serve as a signal peptide directing secretion. The Extracellular segment spans residues 30–721 (APGPDGLDVC…WAQVKDSSLM (692 aa)). The EGF-like 1 domain maps to 35-72 (GLDVCATCHEHATCQQREGKKICICNYGFVGNGRTQCV). 5 disulfides stabilise this stretch: Cys-39-Cys-48, Cys-42-Cys-57, Cys-59-Cys-71, Cys-77-Cys-91, and Cys-85-Cys-100. The region spanning 73-112 (DKNECQFGATLVCGNHTSCHNTPGGFYCICLEGYRATNNN) is the EGF-like 2; calcium-binding domain. N-linked (GlcNAc...) asparagine glycosylation is found at Asn-87 and Asn-112. Residues 125 to 162 (DIDECEVSGLCRHGGRCVNTHGSFECYCMDGYLPRNGP) form the EGF-like 3; calcium-binding domain. 6 cysteine pairs are disulfide-bonded: Cys-129–Cys-141, Cys-135–Cys-150, Cys-179–Cys-221, Cys-206–Cys-234, Cys-239–Cys-281, and Cys-266–Cys-294. Sushi domains follow at residues 177–236 (IDCG…HCQE) and 237–296 (INCG…TCTE). Asn-193 carries an N-linked (GlcNAc...) asparagine glycan. The N-linked (GlcNAc...) asparagine glycan is linked to Asn-253. Asn-348, Asn-367, and Asn-563 each carry an N-linked (GlcNAc...) asparagine glycan. Residues 722–742 (LLQMAGVGLGSLAVVIILTFL) form a helical membrane-spanning segment. Residues 743-747 (SFSAV) are Cytoplasmic-facing.

The protein localises to the membrane. In Homo sapiens (Human), this protein is Sushi domain-containing protein 1 (SUSD1).